The chain runs to 106 residues: Ribulose bisphosphate carboxylase small subunit (106 aa).

This sequence belongs to the RuBisCO small chain family. In terms of assembly, heterohexadecamer of 8 large and 8 small subunits.

It localises to the plastid. It is found in the cyanelle. Its function is as follows. RuBisCO catalyzes two reactions: the carboxylation of D-ribulose 1,5-bisphosphate, the primary event in carbon dioxide fixation, as well as the oxidative fragmentation of the pentose substrate. Both reactions occur simultaneously and in competition at the same active site. Although the small subunit is not catalytic it is essential for maximal activity. The protein is Ribulose bisphosphate carboxylase small subunit of Cyanophora paradoxa.